The following is a 309-amino-acid chain: Tagatose-6-phosphate kinase (309 aa).

The protein belongs to the carbohydrate kinase PfkB family. LacC subfamily.

The enzyme catalyses D-tagatofuranose 6-phosphate + ATP = D-tagatofuranose 1,6-bisphosphate + ADP + H(+). It functions in the pathway carbohydrate metabolism; D-tagatose 6-phosphate degradation; D-glyceraldehyde 3-phosphate and glycerone phosphate from D-tagatose 6-phosphate: step 1/2. The protein is Tagatose-6-phosphate kinase of Streptococcus pneumoniae (strain P1031).